We begin with the raw amino-acid sequence, 277 residues long: Large ribosomal subunit protein uL2 (277 aa).

The disordered stretch occupies residues glycine 222–lysine 277. Residues alanine 264–lysine 277 are compositionally biased toward basic and acidic residues.

The protein belongs to the universal ribosomal protein uL2 family. As to quaternary structure, part of the 50S ribosomal subunit. Forms a bridge to the 30S subunit in the 70S ribosome.

Functionally, one of the primary rRNA binding proteins. Required for association of the 30S and 50S subunits to form the 70S ribosome, for tRNA binding and peptide bond formation. It has been suggested to have peptidyltransferase activity; this is somewhat controversial. Makes several contacts with the 16S rRNA in the 70S ribosome. The polypeptide is Large ribosomal subunit protein uL2 (Streptococcus thermophilus (strain CNRZ 1066)).